Consider the following 106-residue polypeptide: Chaperone modulatory protein CbpM (106 aa).

It belongs to the CbpM family.

Its function is as follows. Interacts with CbpA and inhibits both the DnaJ-like co-chaperone activity and the DNA binding activity of CbpA. Together with CbpA, modulates the activity of the DnaK chaperone system. Does not inhibit the co-chaperone activity of DnaJ. In Coxiella burnetii (strain CbuK_Q154) (Coxiella burnetii (strain Q154)), this protein is Chaperone modulatory protein CbpM.